A 130-amino-acid chain; its full sequence is Small ribosomal subunit protein uS9 (130 aa).

Belongs to the universal ribosomal protein uS9 family.

The polypeptide is Small ribosomal subunit protein uS9 (Paraburkholderia phytofirmans (strain DSM 17436 / LMG 22146 / PsJN) (Burkholderia phytofirmans)).